A 475-amino-acid chain; its full sequence is FAD-dependent monooxygenase penE (475 aa).

Glutamate 35, glycine 49, and arginine 108 together coordinate FAD. Tyrosine 216 is a catalytic residue. Residues aspartate 308 and alanine 321 each contribute to the FAD site. Residue asparagine 437 is glycosylated (N-linked (GlcNAc...) asparagine). A helical membrane pass occupies residues 446-466 (WGSIWLSPVILCLFCMLFLWP).

This sequence belongs to the paxM FAD-dependent monooxygenase family. FAD serves as cofactor.

Its subcellular location is the membrane. The catalysed reaction is [(1'E)-3'-hydroxy-3',7'-dimethylocta-1',6'-dien-1'-yl]-quinolinone B + NADPH + O2 + H(+) = [(1'E)-5'-(3',3'-dimethyloxiran-2'-yl)-3'-hydroxy-3'-methylpent-1'-en-1'-yl]-quinolinone B + NADP(+) + H2O. The protein operates within secondary metabolite biosynthesis. Its pathway is alkaloid biosynthesis. It participates in mycotoxin biosynthesis. FAD-dependent monooxygenase; part of the gene cluster that mediates the biosynthesis of penigequinolones, potent insecticidal alkaloids that contain a highly modified 10-carbon prenyl group. The first stage is catalyzed by the nonribosomal peptide synthetase penN that condenses anthranilic acid and O-methyl-L-tyrosine to produce 4'-methoxycyclopeptin. 4'-methoxycyclopeptin is then converted to 4'-methoxydehydrocyclopeptin by the ketoglutarate-dependent dioxygenase penM through dehydrogenation to form a double bond between C-alpha and C-beta of the O-methyltyrosine side chain. PenM also converts its first product methoxydehydrocyclopeptin to 4'-methoxycyclopenin. The following conversion of 4'methoxycyclopenin into 4'-methoxyviridicatin is catalyzed by the cyclopenase penL. 4'-methoxyviridicatin is the precursor of quinolone natural products, and is further converted to quinolinone B. The prenyltransferase penI then catalyzes the canonical Friedel-Crafts alkylation of quinolinone B with dimethylallyl cation to yield dimethylallyl quinolone, which is subjected to FAD-dependent dehydrogenation by the FAD-linked oxidoreductase penH to yield conjugated aryl diene. The delta(3') double bond then serves as the site of the second alkylation with DMAPP catalyzed by the prenyltransferase penG to yield a carbenium ion intermediate, which can be attacked by H(2)O to yield a styrenyl quinolone containing a C3'-hydroxyprenyl chain, or undergo cyclization to yield yaequinolones J1 and J2. The conversion of the styrenyl quinolone into the tetrahydrofuran-containing yaequinolone C is performed by the FAD-dependent monooxygenase penE and involves epoxidation of the terminal C7'-C8' olefin, followed by epoxide ring opening initiated by the C3' hydroxyl group. The predicted cysteine hydrolase penJ acts as an epoxide hydrolase that enhances the rate of the 5-exo-tet cyclization step, increasing the yield of yaequinolone C. PenF catalyzes the cationic rearrangement of the epoxide formed by penE (before ring opening to produce yaequinolone C) into yaequinolone D. Finally, the short-chain dehydrogenase/reductase (SDR)-like reductase penD, catalyzes both the dehydration of yaequinolone D and the reduction of the resulting oxonium to yield penigequinolone. The protein is FAD-dependent monooxygenase penE of Penicillium thymicola.